Reading from the N-terminus, the 490-residue chain is Calcium-dependent protein kinase 12 (490 aa).

Residues 22 to 280 (YFLGQVLGQG…AHQVLCHPWI (259 aa)) enclose the Protein kinase domain. ATP contacts are provided by residues 28 to 36 (LGQGQFGTT) and Lys-51. Asp-146 serves as the catalytic Proton acceptor. Ser-186 carries the post-translational modification Phosphoserine. The interval 286–316 (APDKPLDCAVVSRLKKFSAMNKLKKMALRVI) is autoinhibitory domain. EF-hand domains lie at 323-358 (EEIG…VGSE), 359-394 (LMES…LNKL), 395-430 (EREE…FGIN), and 434-464 (LDEM…GNGT). Residues Asp-336, Asp-338, Ser-340, Thr-342, Glu-347, Asp-372, Asp-374, Ser-376, Thr-378, Glu-383, Asp-408, Asp-410, Ser-412, Tyr-414, Glu-419, Asp-442, Asp-444, Asp-446, Gln-448, and Glu-453 each contribute to the Ca(2+) site.

The protein belongs to the protein kinase superfamily. Ser/Thr protein kinase family. CDPK subfamily. Interacts weakly with DI19. Ubiquitously expressed.

It catalyses the reaction L-seryl-[protein] + ATP = O-phospho-L-seryl-[protein] + ADP + H(+). The enzyme catalyses L-threonyl-[protein] + ATP = O-phospho-L-threonyl-[protein] + ADP + H(+). Activated by calcium. Autophosphorylation may play an important role in the regulation of the kinase activity. May play a role in signal transduction pathways that involve calcium as a second messenger. This chain is Calcium-dependent protein kinase 12 (CPK12), found in Arabidopsis thaliana (Mouse-ear cress).